The following is a 206-amino-acid chain: Outer-membrane lipoprotein carrier protein (206 aa).

An N-terminal signal peptide occupies residues 1 to 21 (MKKLLCAVLLSPLLYSNAVLA).

The protein belongs to the LolA family. As to quaternary structure, monomer.

Its subcellular location is the periplasm. Functionally, participates in the translocation of lipoproteins from the inner membrane to the outer membrane. Only forms a complex with a lipoprotein if the residue after the N-terminal Cys is not an aspartate (The Asp acts as a targeting signal to indicate that the lipoprotein should stay in the inner membrane). This Shewanella oneidensis (strain ATCC 700550 / JCM 31522 / CIP 106686 / LMG 19005 / NCIMB 14063 / MR-1) protein is Outer-membrane lipoprotein carrier protein.